Here is a 757-residue protein sequence, read N- to C-terminus: Lysyl oxidase homolog 4 (757 aa).

A signal peptide spans 1 to 25 (MMWPQPPTFSLFLLLLLSQAPSSRP). SRCR domains follow at residues 33-134 (LRLV…VVCH), 160-288 (VRLK…VSCV), 312-412 (VRLR…VRCN), and 422-530 (VRLA…VACM). Disulfide bonds link C59–C123, C72–C133, C103–C113, C192–C277, C205–C287, C252–C262, C337–C401, C350–C411, C381–C391, C451–C516, C464–C529, C498–C508, C559–C565, C611–C659, C643–C649, C671–C681, and C718–C732. A glycan (N-linked (GlcNAc...) asparagine) is linked at N199. The tract at residues 534–737 (PDLVMNAQLV…WLHNCHTGDS (204 aa)) is lysyl-oxidase like. H612, H614, and H616 together coordinate Cu cation. The N-linked (GlcNAc...) asparagine glycan is linked to N630. A cross-link (lysine tyrosylquinone (Lys-Tyr)) is located at residues 639-675 (KASFCLEDTNCPSGVQRRYACANFGEQGVAVGCWDTY). Y675 carries the post-translational modification 2',4',5'-topaquinone.

The protein belongs to the lysyl oxidase family. Cu cation is required as a cofactor. Lysine tyrosylquinone residue serves as cofactor. In terms of processing, the lysine tyrosylquinone cross-link (LTQ) is generated by condensation of the epsilon-amino group of a lysine with a topaquinone produced by oxidation of tyrosine. May be proteolytically cleaved by BMP1.

It is found in the secreted. The protein resides in the extracellular space. The catalysed reaction is L-lysyl-[protein] + O2 + H2O = (S)-2-amino-6-oxohexanoyl-[protein] + H2O2 + NH4(+). In terms of biological role, catalyzes the oxidative deamination of lysine and hydroxylysine residues in collagen and elastin, resulting in the formation of covalent cross-linkages, and the stabilization of collagen and elastin fibers. This chain is Lysyl oxidase homolog 4 (Loxl4), found in Mus musculus (Mouse).